A 58-amino-acid polypeptide reads, in one-letter code: Probable mRNA interferase HicA 2 (58 aa).

This sequence belongs to the HicA mRNA interferase family. Probably forms a complex with the cognate antitoxin HicB 2 which inhibits the mRNA interferase activity.

Its function is as follows. Toxic component of a type II toxin-antitoxin (TA) system. A probable translation-independent mRNA interferase. The protein is Probable mRNA interferase HicA 2 (hicA2) of Photorhabdus laumondii subsp. laumondii (strain DSM 15139 / CIP 105565 / TT01) (Photorhabdus luminescens subsp. laumondii).